The sequence spans 464 residues: Argininosuccinate lyase (464 aa).

It belongs to the lyase 1 family. Argininosuccinate lyase subfamily.

It is found in the cytoplasm. The enzyme catalyses 2-(N(omega)-L-arginino)succinate = fumarate + L-arginine. It functions in the pathway amino-acid biosynthesis; L-arginine biosynthesis; L-arginine from L-ornithine and carbamoyl phosphate: step 3/3. The protein is Argininosuccinate lyase of Ectopseudomonas mendocina (strain ymp) (Pseudomonas mendocina).